The chain runs to 98 residues: NADH-ubiquinone oxidoreductase chain 4L (98 aa).

3 consecutive transmembrane segments (helical) span residues Met-1–Ile-21, Leu-30–Thr-50, and Ile-61–Ile-81.

It belongs to the complex I subunit 4L family. As to quaternary structure, core subunit of respiratory chain NADH dehydrogenase (Complex I) which is composed of 45 different subunits.

It localises to the mitochondrion inner membrane. It catalyses the reaction a ubiquinone + NADH + 5 H(+)(in) = a ubiquinol + NAD(+) + 4 H(+)(out). In terms of biological role, core subunit of the mitochondrial membrane respiratory chain NADH dehydrogenase (Complex I) which catalyzes electron transfer from NADH through the respiratory chain, using ubiquinone as an electron acceptor. Part of the enzyme membrane arm which is embedded in the lipid bilayer and involved in proton translocation. In Gulo gulo (Wolverine), this protein is NADH-ubiquinone oxidoreductase chain 4L (MT-ND4L).